Reading from the N-terminus, the 405-residue chain is BRCA1-A complex subunit Abraxas 1 (405 aa).

The MPN domain maps to Ser-7–Leu-153. A coiled-coil region spans residues Ser-208 to Ile-262. Positions Leu-365–Phe-405 are disordered. Phosphoserine is present on Ser-402. The pSXXF motif motif lies at Ser-402–Phe-405.

The protein belongs to the FAM175 family. Abraxas subfamily. In terms of assembly, component of the BRCA1-A complex. Component of the BRISC complex. Homodimer. Interacts directly (when phosphorylated at Ser-402) with BRCA1. The phosphorylated homodimer can interact directly with two BRCA1 chains, giving rise to a heterotetramer. Phosphorylation of Ser-402 of the pSXXF motif by ATM or ATR constitutes a specific recognition motif for the BRCT domain of BRCA1.

The protein localises to the nucleus. Functionally, involved in DNA damage response and double-strand break (DSB) repair. Component of the BRCA1-A complex, acting as a central scaffold protein that assembles the various components of the complex and mediates the recruitment of BRCA1. The BRCA1-A complex specifically recognizes 'Lys-63'-linked ubiquitinated histones H2A and H2AX at DNA lesion sites, leading to target the BRCA1-BARD1 heterodimer to sites of DNA damage at DSBs. This complex also possesses deubiquitinase activity that specifically removes 'Lys-63'-linked ubiquitin on histones H2A and H2AX. In Gallus gallus (Chicken), this protein is BRCA1-A complex subunit Abraxas 1.